Reading from the N-terminus, the 250-residue chain is Cell division protein FtsQ (250 aa).

At 1–11 (MWNNVRQLNLA) the chain is on the cytoplasmic side. The chain crosses the membrane as a helical span at residues 12–32 (ASALYALLLLVLAAAGCYWLI). Residues 33–250 (QRPAFALREI…FLTDTDKGKK (218 aa)) are Periplasmic-facing. A POTRA domain is found at 37–106 (FALREIRIDG…NALAVTLEEY (70 aa)).

Belongs to the FtsQ/DivIB family. FtsQ subfamily. As to quaternary structure, part of a complex composed of FtsB, FtsL and FtsQ.

It localises to the cell inner membrane. Functionally, essential cell division protein. May link together the upstream cell division proteins, which are predominantly cytoplasmic, with the downstream cell division proteins, which are predominantly periplasmic. May control correct divisome assembly. The chain is Cell division protein FtsQ from Burkholderia pseudomallei (strain K96243).